Consider the following 100-residue polypeptide: Defensin-6 (100 aa).

Residues 1–19 form the signal peptide; that stretch reads MRTLTILTAVLLVALQAKA. Positions 20-68 are excised as a propeptide; it reads EPLQAEDDPLQAKAYEADAQEQRGANDQDFAVSFAEDASSSLRALGSTR. Intrachain disulfides connect C72-C99, C74-C88, and C78-C98.

This sequence belongs to the alpha-defensin family. As to quaternary structure, homodimer. Self-assembles into higher-order oligomers termed nanonets, fibril-like structures that entrap microbes. Self-assembly into nanonets seems to protect against proteolytic digestion in duodenal fluid. Interacts with Y.enterocolitica invasin and S.typhimurium fliC/flagellin; the interaction creates an anchoring site for progressive DEFA6 self-assembly into nanonets. In terms of processing, proteolytically cleaved by trypsin at Arg-68; the propeptide is stored in the tissue of the small intestine and the mature peptide is found in the luminal fluid; cleavage may occur during or after release into the lumen. The N-terminal propeptide region suppresses self-assembly and renders DEFA6 propeptide unable to agglutinate bacteria and protect human epithelial cells from bacterial invasion. Under reducing conditions, naturally present in the gut owing to the low redox potential or enzymatically generated by the thioredoxin system, the disulfide bridges are opened leading to a conformational change of DEF6, thereby changing its antimicrobial spectrum. The reduced form exhibits inhibitory activity against anaerobic bacteria, in contrast to the minimal antimicrobial activity of the disulfide-linked oxidized form. The formation of higher-order nanonets and bacterial entrapment is independent of the redox state. As to expression, expressed in Paneth cells of the small intestine (at protein level).

It is found in the secreted. The protein resides in the cytoplasmic vesicle. It localises to the secretory vesicle. Its function is as follows. Host-defense peptide that contributes to intestinal innate immunity and mediates homeostasis at mucosal surfaces by forming higher-order oligomers that capture bacteria and prevent microbial invasion of the epithelium. After binding to bacterial surface proteins, undergoes ordered self-assembly to form fibril-like nanonets that surround and entangle bacteria and thereby prevent bacterial invasion across the epithelial barrier. Entangles and agglutinates Gram-negative bacteria, such as E.coli, S.typhimurium and Y.enterocolitica, and Gram-positive bacteria such as L.monocytogenes, thereby protecting the intestine against invasion by enteric bacterial pathogens. Blocks adhesion of C.albicans to intestinal epithelial cells and thereby suppresses fungal invasion of epithelial cells and biofilm formation. Under reducing conditions and in an acidic environment similar to the intestinal milieu, exhibits inhibitory activity against anaerobic bacteria such as B.adolescentis, L.acidophilus and B.breve, as well as B.longum and S.thermophilus, possibly by leading to alterations in bacterial cell envelope structures. The disulfide-linked oxidized form exhibits negligible antimicrobial activity against Gram-negative and Gram-positive bacteria, as compared to the enteric defensin DEFA5. This Homo sapiens (Human) protein is Defensin-6 (DEFA6).